The chain runs to 387 residues: Protein phosphatase 2C 50 (387 aa).

In terms of domain architecture, PPM-type phosphatase spans 60–377 (VWGCASTRGR…DNITVIVVDL (318 aa)). Positions 118 and 119 each coordinate Mn(2+). Residues 264-268 (VSGIL) carry the Modulates binding affinity to PYR/PYL/RCAR abscisic acid intracellular receptors motif. Mn(2+)-binding residues include D306 and D368.

The protein belongs to the PP2C family. In terms of assembly, interacts with PYL3, PYL5, PYL9 and PYL10. Binding to PYL3, PYL5, PYL9 and PYL10 is dependent on the presence of abscisic acid (ABA). Interacts with SAPK10. Mg(2+) serves as cofactor. Requires Mn(2+) as cofactor.

It catalyses the reaction O-phospho-L-seryl-[protein] + H2O = L-seryl-[protein] + phosphate. The enzyme catalyses O-phospho-L-threonyl-[protein] + H2O = L-threonyl-[protein] + phosphate. Functionally, protein phosphatase involved in abscisic acid (ABA) signaling. Together with PYL3 and SAPK10, may form an ABA signaling module involved in stress response. This Oryza sativa subsp. japonica (Rice) protein is Protein phosphatase 2C 50.